The primary structure comprises 254 residues: Sec-independent protein translocase protein TatC (254 aa).

6 consecutive transmembrane segments (helical) span residues 40 to 60, 82 to 104, 125 to 145, 172 to 192, 210 to 230, and 233 to 253; these read IFLSLGAVLVGVVACFIFVKP, FFFVSVKVAGYSGILVMSPFILY, VVLGSSVLFFAGLGFAYYALI, FVLLLMFSTGLAFQIPIIQVV, FVILGAMVLGAILTPSTDPLT, and LLAGAVLGLYFGGIGCVRLLG.

The protein belongs to the TatC family. In terms of assembly, forms a complex with TatA.

The protein localises to the cell inner membrane. Its function is as follows. Part of the twin-arginine translocation (Tat) system that transports large folded proteins containing a characteristic twin-arginine motif in their signal peptide across membranes. This Synechocystis sp. (strain ATCC 27184 / PCC 6803 / Kazusa) protein is Sec-independent protein translocase protein TatC.